A 359-amino-acid chain; its full sequence is DNA replication and repair protein RecF (359 aa).

30–37 (GNNGSGKT) contributes to the ATP binding site.

It belongs to the RecF family.

It localises to the cytoplasm. The RecF protein is involved in DNA metabolism; it is required for DNA replication and normal SOS inducibility. RecF binds preferentially to single-stranded, linear DNA. It also seems to bind ATP. The polypeptide is DNA replication and repair protein RecF (Haemophilus influenzae (strain 86-028NP)).